Reading from the N-terminus, the 917-residue chain is Lipoxygenase 6, chloroplastic (917 aa).

The N-terminal 40 residues, 1–40, are a transit peptide targeting the chloroplast; sequence MFVASPVKTNFNGVSLVKSPAFSALSCRKQHRVPISRQVR. Over residues 46 to 57 the composition is skewed to basic and acidic residues; sequence EEKAVDQEDGKK. A disordered region spans residues 46–66; the sequence is EEKAVDQEDGKKSTNKPLINS. In terms of domain architecture, PLAT spans 98 to 216; that stretch reads ERFEHQLELF…DNPQARIIFR (119 aa). The Lipoxygenase domain maps to 219–917; sequence PCLPSETPDG…GRGIPNSISI (699 aa). Fe cation-binding residues include His575, His580, His767, and Asn771. The interval 880–904 is disordered; the sequence is KDKKLKNRTGAGMPPYELLLPTSPH. Ile917 contributes to the Fe cation binding site.

Belongs to the lipoxygenase family. Fe cation is required as a cofactor.

Its subcellular location is the plastid. It is found in the chloroplast. The enzyme catalyses (9Z,12Z)-octadecadienoate + O2 = (13S)-hydroperoxy-(9Z,11E)-octadecadienoate. It carries out the reaction (9Z,12Z,15Z)-octadecatrienoate + O2 = (13S)-hydroperoxy-(9Z,11E,15Z)-octadecatrienoate. It participates in lipid metabolism; oxylipin biosynthesis. Its function is as follows. Plant lipoxygenases may be involved in a number of diverse aspects of plant physiology including growth and development, pest resistance, and senescence or responses to wounding. Catalyzes the hydroperoxidation of lipids containing a cis,cis-1,4-pentadiene structure. 13S-lipoxygenase that can use linolenic acid as substrates. The sequence is that of Lipoxygenase 6, chloroplastic from Arabidopsis thaliana (Mouse-ear cress).